The sequence spans 346 residues: Rhomboid protein 1, mitochondrial (346 aa).

Residues M1 to K73 constitute a mitochondrion transit peptide. The next 6 membrane-spanning stretches (helical) occupy residues S109–F129, L145–C165, M203–F223, L246–F266, I275–A295, and F308–S328. The Nucleophile role is filled by S256. The active site involves H313.

It belongs to the peptidase S54 family.

The protein resides in the mitochondrion inner membrane. The enzyme catalyses Cleaves type-1 transmembrane domains using a catalytic dyad composed of serine and histidine that are contributed by different transmembrane domains.. Functionally, mitochondrial rhomboid serine protease processing the mitochondrial membrane fusion regulator MGM1, and the cytochrome c peroxidase (CCP1). Required for TIM11 stability, ATP synthase complex assembly, mitochondrial morphology, cytochrome c (CYC1) storage and mitochondrial genome maintenance. This chain is Rhomboid protein 1, mitochondrial (PCP1), found in Saccharomyces cerevisiae (strain ATCC 204508 / S288c) (Baker's yeast).